The following is a 340-amino-acid chain: MIFIDACKRQPTPYTPIWMMRQAGRYLTEYMQTRERAGSFLDLCKNPELACEVTLQPVEILDVDAAILFSDILVVPMEMGLELGFYQGEGPRFSQTIRTQKDLLLLQEGAENRLGYVYEAIHRIRESLHQEKALIGFCGSPWTLATYMIEGEGSKTYAHSKKMLYSDPKLLHAILAQVSEALKGYLAKQIEAGVNAVMVFDSWAAALEESVYFEFSWEYMKEIASFVKARYPHIPVMLFPKGIAGFLDKIEGDFDVFGVDWSTPMDLAKAKLGDRYVLQGNLEPARLYDRAKMEEGVDHILSIMGKESGHVFNLGHGMMPDLPRENAIELVKMVRQKSAR.

Substrate contacts are provided by residues 21–25, F40, D71, Y147, S202, and H316; that span reads RQAGR.

This sequence belongs to the uroporphyrinogen decarboxylase family. As to quaternary structure, homodimer.

The protein resides in the cytoplasm. The enzyme catalyses uroporphyrinogen III + 4 H(+) = coproporphyrinogen III + 4 CO2. It participates in porphyrin-containing compound metabolism; protoporphyrin-IX biosynthesis; coproporphyrinogen-III from 5-aminolevulinate: step 4/4. Functionally, catalyzes the decarboxylation of four acetate groups of uroporphyrinogen-III to yield coproporphyrinogen-III. This Wolinella succinogenes (strain ATCC 29543 / DSM 1740 / CCUG 13145 / JCM 31913 / LMG 7466 / NCTC 11488 / FDC 602W) (Vibrio succinogenes) protein is Uroporphyrinogen decarboxylase.